Reading from the N-terminus, the 377-residue chain is 4-hydroxy-3-methylbut-2-en-1-yl diphosphate synthase (flavodoxin) (377 aa).

Residues Cys-272, Cys-275, Cys-307, and Glu-314 each contribute to the [4Fe-4S] cluster site.

The protein belongs to the IspG family. [4Fe-4S] cluster is required as a cofactor.

The catalysed reaction is (2E)-4-hydroxy-3-methylbut-2-enyl diphosphate + oxidized [flavodoxin] + H2O + 2 H(+) = 2-C-methyl-D-erythritol 2,4-cyclic diphosphate + reduced [flavodoxin]. Its pathway is isoprenoid biosynthesis; isopentenyl diphosphate biosynthesis via DXP pathway; isopentenyl diphosphate from 1-deoxy-D-xylulose 5-phosphate: step 5/6. Functionally, converts 2C-methyl-D-erythritol 2,4-cyclodiphosphate (ME-2,4cPP) into 1-hydroxy-2-methyl-2-(E)-butenyl 4-diphosphate. This chain is 4-hydroxy-3-methylbut-2-en-1-yl diphosphate synthase (flavodoxin), found in Zymomonas mobilis subsp. mobilis (strain ATCC 31821 / ZM4 / CP4).